A 141-amino-acid chain; its full sequence is Hemoglobin subunit alpha-1 (141 aa).

The Globin domain maps to 1–141 (VLSPEDKNNV…VSTVLTSKYR (141 aa)). His-58 contacts O2. Position 87 (His-87) interacts with heme b.

Belongs to the globin family. Heterotetramer of two alpha chains and two beta chains. As to expression, red blood cells.

Its function is as follows. Involved in oxygen transport from the lung to the various peripheral tissues. In Tadarida brasiliensis (Brazilian free-tailed bat), this protein is Hemoglobin subunit alpha-1.